The sequence spans 407 residues: uncharacterized protein (407 aa).

Topologically, residues 1-290 are lumenal; that stretch reads MPLNIIGTAL…SNSLRRVISN (290 aa). NADP(+) contacts are provided by Asp-114, Lys-236, and Ser-281. The active-site Lowers pKa of active site Tyr is Lys-236. The chain crosses the membrane as a helical span at residues 291 to 311; the sequence is GSVVLLIILYCILLYPILWLF. Residues 312 to 407 lie on the Cytoplasmic side of the membrane; it reads TKSGRRGDQS…KSQNKSRKDD (96 aa). The stretch at 361 to 390 forms a coiled coil; the sequence is ELQKKLFDNTERDILQLEKKVAAKRNANKT. The interval 383-407 is disordered; the sequence is AKRNANKTGNQNSKKKSQNKSRKDD. The span at 395–407 shows a compositional bias: basic residues; that stretch reads SKKKSQNKSRKDD.

The protein belongs to the short-chain dehydrogenases/reductases (SDR) family.

Its subcellular location is the endoplasmic reticulum membrane. In terms of biological role, may be involved in lipid metabolism. This is an uncharacterized protein from Saccharomyces cerevisiae (strain ATCC 204508 / S288c) (Baker's yeast).